The following is a 242-amino-acid chain: Type III pantothenate kinase (242 aa).

7-14 (DLGNSRFK) lines the ATP pocket. Residues tyrosine 91 and 98–101 (GVDR) contribute to the substrate site. Aspartate 100 serves as the catalytic Proton acceptor. Residue threonine 121 participates in ATP binding. Threonine 171 provides a ligand contact to substrate.

It belongs to the type III pantothenate kinase family. Homodimer. NH4(+) serves as cofactor. Requires K(+) as cofactor.

The protein localises to the cytoplasm. It carries out the reaction (R)-pantothenate + ATP = (R)-4'-phosphopantothenate + ADP + H(+). It participates in cofactor biosynthesis; coenzyme A biosynthesis; CoA from (R)-pantothenate: step 1/5. Functionally, catalyzes the phosphorylation of pantothenate (Pan), the first step in CoA biosynthesis. This Xylella fastidiosa (strain 9a5c) protein is Type III pantothenate kinase.